The following is a 200-amino-acid chain: Alpha/beta-tubulin-N-acetyltransferase 9 (200 aa).

Residues 34-181 (ETLRELTASE…HEVTLERPIT (148 aa)) form the N-acetyltransferase domain.

The protein belongs to the acetyltransferase family. GNAT subfamily. As to quaternary structure, interacts with microtubules as well as alpha/beta-tubulin heterodimers.

The protein localises to the nucleus. Its subcellular location is the cytoplasm. It localises to the cytoskeleton. It is found in the spindle. The protein resides in the spindle pole. The catalysed reaction is N-terminal L-methionyl-[tubulin] + acetyl-CoA = N-terminal N(alpha)-acetyl-L-methionyl-[tubulin] + CoA + H(+). N-acetyltransferase that mediates the acetylation of the N-terminal residues of alpha- and beta-tubulin. Required for microtubule stability and inhibition of JNK signaling to promote cell survival during development, possibly acting independently of its N-acetyltransferase activity. Necessary for the stabilization of spindle microtubules and for mitosis progression. Regulates microtubule stability by inhibiting Spastin-mediated depolymerization and promoting Eb1-mediated polymerization. The sequence is that of Alpha/beta-tubulin-N-acetyltransferase 9 from Drosophila melanogaster (Fruit fly).